The primary structure comprises 346 residues: Ribonucleoside-diphosphate reductase subunit beta (346 aa).

Fe cation is bound by residues Glu89, Glu120, and His123. Tyr129 is an active-site residue. Residues Glu193, Glu227, and His230 each contribute to the Fe cation site.

It belongs to the ribonucleoside diphosphate reductase small chain family. As to quaternary structure, tetramer of two alpha and two beta subunits. Requires Fe cation as cofactor.

The enzyme catalyses a 2'-deoxyribonucleoside 5'-diphosphate + [thioredoxin]-disulfide + H2O = a ribonucleoside 5'-diphosphate + [thioredoxin]-dithiol. Provides the precursors necessary for DNA synthesis. Catalyzes the biosynthesis of deoxyribonucleotides from the corresponding ribonucleotides. This Chlamydia trachomatis serovar D (strain ATCC VR-885 / DSM 19411 / UW-3/Cx) protein is Ribonucleoside-diphosphate reductase subunit beta (nrdB).